Consider the following 415-residue polypeptide: Peptide chain release factor subunit 1 (415 aa).

It belongs to the eukaryotic release factor 1 family. In terms of assembly, heterodimer of two subunits, one of which binds GTP.

The protein resides in the cytoplasm. Functionally, directs the termination of nascent peptide synthesis (translation) in response to the termination codons UAA, UAG and UGA. The chain is Peptide chain release factor subunit 1 from Thermococcus onnurineus (strain NA1).